The sequence spans 321 residues: Phospho-N-acetylmuramoyl-pentapeptide-transferase (321 aa).

10 consecutive transmembrane segments (helical) span residues 1–21 (MIFI…PILI), 50–70 (MGGL…IIFV), 76–96 (IILL…DDYI), 112–132 (FLAQ…FHLV), 140–160 (IPFV…IVFW), 176–196 (GLAT…SYML), 200–220 (AIGI…PYNL), 225–245 (VFMG…ISIM), 250–270 (LSLI…MLQV), and 300–320 (VVTV…WIGV).

Belongs to the glycosyltransferase 4 family. MraY subfamily. The cofactor is Mg(2+).

The protein localises to the cell membrane. It carries out the reaction UDP-N-acetyl-alpha-D-muramoyl-L-alanyl-gamma-D-glutamyl-L-lysyl-D-alanyl-D-alanine + di-trans,octa-cis-undecaprenyl phosphate = Mur2Ac(oyl-L-Ala-gamma-D-Glu-L-Lys-D-Ala-D-Ala)-di-trans,octa-cis-undecaprenyl diphosphate + UMP. It functions in the pathway cell wall biogenesis; peptidoglycan biosynthesis. Functionally, catalyzes the initial step of the lipid cycle reactions in the biosynthesis of the cell wall peptidoglycan: transfers peptidoglycan precursor phospho-MurNAc-pentapeptide from UDP-MurNAc-pentapeptide onto the lipid carrier undecaprenyl phosphate, yielding undecaprenyl-pyrophosphoryl-MurNAc-pentapeptide, known as lipid I. The chain is Phospho-N-acetylmuramoyl-pentapeptide-transferase from Staphylococcus epidermidis (strain ATCC 35984 / DSM 28319 / BCRC 17069 / CCUG 31568 / BM 3577 / RP62A).